A 486-amino-acid polypeptide reads, in one-letter code: Acetyl-coenzyme A carboxylase carboxyl transferase subunit beta, chloroplastic (486 aa).

The CoA carboxyltransferase N-terminal domain occupies 224–486 (LWVQCENCYG…FQFHGFFPRP (263 aa)). Residues Cys228, Cys231, Cys247, and Cys250 each contribute to the Zn(2+) site. Residues 228-250 (CENCYGLNYKKFFSSKMNICEQC) form a C4-type zinc finger.

This sequence belongs to the AccD/PCCB family. Acetyl-CoA carboxylase is a heterohexamer composed of biotin carboxyl carrier protein, biotin carboxylase and 2 subunits each of ACCase subunit alpha and ACCase plastid-coded subunit beta (accD). Zn(2+) is required as a cofactor.

It is found in the plastid. The protein localises to the chloroplast stroma. The catalysed reaction is N(6)-carboxybiotinyl-L-lysyl-[protein] + acetyl-CoA = N(6)-biotinyl-L-lysyl-[protein] + malonyl-CoA. It participates in lipid metabolism; malonyl-CoA biosynthesis; malonyl-CoA from acetyl-CoA: step 1/1. In terms of biological role, component of the acetyl coenzyme A carboxylase (ACC) complex. Biotin carboxylase (BC) catalyzes the carboxylation of biotin on its carrier protein (BCCP) and then the CO(2) group is transferred by the transcarboxylase to acetyl-CoA to form malonyl-CoA. This is Acetyl-coenzyme A carboxylase carboxyl transferase subunit beta, chloroplastic from Nymphaea alba (White water-lily).